A 630-amino-acid polypeptide reads, in one-letter code: Chaperone protein HtpG (630 aa).

Residues 1 to 339 form an a; substrate-binding region; that stretch reads MKGQETRGFQ…SNDLPLNVSR (339 aa). Residues 340-555 are b; that stretch reads EILQDNSITR…VDEMSTQMAK (216 aa). Positions 556 to 630 are c; that stretch reads LFAAAGQQVP…MNQLLLSEKA (75 aa).

Belongs to the heat shock protein 90 family. Homodimer.

It localises to the cytoplasm. Functionally, molecular chaperone. Has ATPase activity. The polypeptide is Chaperone protein HtpG (Photorhabdus laumondii subsp. laumondii (strain DSM 15139 / CIP 105565 / TT01) (Photorhabdus luminescens subsp. laumondii)).